We begin with the raw amino-acid sequence, 203 residues long: FMN-dependent NADH:quinone oxidoreductase (203 aa).

FMN is bound by residues serine 9, 15-17, and 138-141; these read SVS and SRGG.

It belongs to the azoreductase type 1 family. In terms of assembly, homodimer. Requires FMN as cofactor.

The enzyme catalyses 2 a quinone + NADH + H(+) = 2 a 1,4-benzosemiquinone + NAD(+). It catalyses the reaction N,N-dimethyl-1,4-phenylenediamine + anthranilate + 2 NAD(+) = 2-(4-dimethylaminophenyl)diazenylbenzoate + 2 NADH + 2 H(+). In terms of biological role, quinone reductase that provides resistance to thiol-specific stress caused by electrophilic quinones. Its function is as follows. Also exhibits azoreductase activity. Catalyzes the reductive cleavage of the azo bond in aromatic azo compounds to the corresponding amines. The polypeptide is FMN-dependent NADH:quinone oxidoreductase (Methylorubrum populi (strain ATCC BAA-705 / NCIMB 13946 / BJ001) (Methylobacterium populi)).